The chain runs to 422 residues: MLDLEVVPERSLGNEQWEFTLGMPLAQAVAILQKHCRIIKNVQVLYSEQSPLSHDLILNLTQDGIKLMFDAFNQRLKVIEVCDLTKVKLKYCGVHFNSQAIAPTIEQIDQSFGATHPGVYNSAEQLFHLNFRGLSFSFQLDSWTEAPKYEPNFAHGLASLQIPHGATVKRMYIYSGNSLQDTKAPMMPLSCFLGNVYAESVDVLRDGTGPAGLRLRLLAAGCGPGLLADAKMRVFERSVYFGDSCQDVLSMLGSPHKVFYKSEDKMKIHSPSPHKQVPSKCNDYFFNYFTLGVDILFDANTHKVKKFVLHTNYPGHYNFNIYHRCEFKIPLAIKKENADGQTETCTTYSKWDNIQELLGHPVEKPVVLHRSSSPNNTNPFGSTFCFGLQRMIFEVMQNNHIASVTLYGPPRPGSHLRTAELP.

It belongs to the PHAF1 family. In terms of assembly, interacts with BCAS3; the interaction is requrired for the association with the phagophore.

The protein localises to the cytoplasm. Its subcellular location is the preautophagosomal structure. Functionally, plays a regulatory role in autophagic activity. In complex with BCAS3, associates with the autophagosome formation site during both non-selective and selective autophagy. This Homo sapiens (Human) protein is Phagosome assembly factor 1.